A 259-amino-acid chain; its full sequence is Large ribosomal subunit protein uL3c (259 aa).

A chloroplast-targeting transit peptide spans 1–37; that stretch reads LKTTPLTLRSPFLHRLPLRALKTHKPTSLHISKSSIS. A disordered region spans residues 176 to 211; it reads MTHGSKSHRQLGSIGAGTTPGRVYKGKKMPGRMGGT. Positions 199–211 are enriched in basic residues; it reads YKGKKMPGRMGGT.

This sequence belongs to the universal ribosomal protein uL3 family. Part of the 50S ribosomal subunit.

It is found in the plastid. Its subcellular location is the chloroplast. In terms of biological role, one of the primary rRNA binding proteins, it binds directly near the 3'-end of the 23S rRNA, where it nucleates assembly of the 50S subunit. This is Large ribosomal subunit protein uL3c (RPL3) from Nicotiana tabacum (Common tobacco).